A 247-amino-acid polypeptide reads, in one-letter code: Chromosome partition protein MukE (247 aa).

The segment at 213–247 (AQSLQEEKNGLKDNMDQSAVENEQYFENEENEGIA) is disordered. A compositionally biased stretch (basic and acidic residues) spans 217–227 (QEEKNGLKDNM). Residues 236–247 (QYFENEENEGIA) show a composition bias toward acidic residues.

It belongs to the MukE family. As to quaternary structure, interacts, and probably forms a ternary complex, with MukF and MukB. The complex formation is stimulated by calcium or magnesium.

The protein resides in the cytoplasm. It localises to the nucleoid. Its function is as follows. Involved in chromosome condensation, segregation and cell cycle progression. May participate in facilitating chromosome segregation by condensation DNA from both sides of a centrally located replisome during cell division. Probably acts via its interaction with MukB and MukF. This Histophilus somni (strain 2336) (Haemophilus somnus) protein is Chromosome partition protein MukE.